A 405-amino-acid polypeptide reads, in one-letter code: GTPase Obg (405 aa).

The region spanning 1-159 (MRFIDEAVVT…KVLKFELKVV (159 aa)) is the Obg domain. An OBG-type G domain is found at 160–333 (ADVGLIGLPN…IKYHLMNEIE (174 aa)). GTP is bound by residues 166-173 (GLPNAGKS), 191-195 (FTTLV), 213-216 (DIPG), 283-286 (NKID), and 314-316 (ATL). Mg(2+) is bound by residues Ser173 and Thr193. A compositionally biased stretch (basic and acidic residues) spans 371–382 (YRAARKAAREGT). The interval 371–405 (YRAARKAAREGTDLSDDDFDGSDDDDDGVEVIYAP) is disordered. Over residues 383–399 (DLSDDDFDGSDDDDDGV) the composition is skewed to acidic residues.

This sequence belongs to the TRAFAC class OBG-HflX-like GTPase superfamily. OBG GTPase family. As to quaternary structure, monomer. The cofactor is Mg(2+).

It is found in the cytoplasm. In terms of biological role, an essential GTPase which binds GTP, GDP and possibly (p)ppGpp with moderate affinity, with high nucleotide exchange rates and a fairly low GTP hydrolysis rate. Plays a role in control of the cell cycle, stress response, ribosome biogenesis and in those bacteria that undergo differentiation, in morphogenesis control. This is GTPase Obg from Psychrobacter arcticus (strain DSM 17307 / VKM B-2377 / 273-4).